Here is a 622-residue protein sequence, read N- to C-terminus: Chaperone protein DnaK (622 aa).

At Thr-197 the chain carries Phosphothreonine; by autocatalysis. Composition is skewed to basic and acidic residues over residues 515–528 (LHKE…EAVE) and 575–614 (ASKE…KKDD). Disordered stretches follow at residues 515–537 (LHKE…DSLV) and 575–622 (ASKE…AEVE).

This sequence belongs to the heat shock protein 70 family.

Functionally, acts as a chaperone. This chain is Chaperone protein DnaK, found in Campylobacter lari (strain RM2100 / D67 / ATCC BAA-1060).